A 240-amino-acid polypeptide reads, in one-letter code: Ubiquitin domain-containing protein 2 (240 aa).

Residues 1–48 (MGGCVGSHHDSSGSLNENSDGTGVALGRNQPLKREKPKWKSDYPMTDG) form a disordered region. A compositionally biased stretch (polar residues) spans 12-21 (SGSLNENSDG). Residues 32-41 (LKREKPKWKS) show a composition bias toward basic and acidic residues. Residues 152-227 (CQLRLRLSTG…VQVIVSQPPT (76 aa)) enclose the Ubiquitin-like domain.

The protein localises to the cytoplasm. The polypeptide is Ubiquitin domain-containing protein 2 (ubtd2) (Danio rerio (Zebrafish)).